A 356-amino-acid chain; its full sequence is S-adenosylmethionine:tRNA ribosyltransferase-isomerase (356 aa).

This sequence belongs to the QueA family. In terms of assembly, monomer.

It is found in the cytoplasm. It catalyses the reaction 7-aminomethyl-7-carbaguanosine(34) in tRNA + S-adenosyl-L-methionine = epoxyqueuosine(34) in tRNA + adenine + L-methionine + 2 H(+). It functions in the pathway tRNA modification; tRNA-queuosine biosynthesis. Transfers and isomerizes the ribose moiety from AdoMet to the 7-aminomethyl group of 7-deazaguanine (preQ1-tRNA) to give epoxyqueuosine (oQ-tRNA). This is S-adenosylmethionine:tRNA ribosyltransferase-isomerase from Citrobacter koseri (strain ATCC BAA-895 / CDC 4225-83 / SGSC4696).